We begin with the raw amino-acid sequence, 246 residues long: Transcription factor MYB113 (246 aa).

2 HTH myb-type domains span residues 5 to 61 and 62 to 112; these read PKGL…KPSI and KRGK…SKKH. 2 consecutive DNA-binding regions (H-T-H motif) follow at residues 33 to 57 and 85 to 108; these read WHRV…LNYL and WSLI…NTHL.

As to quaternary structure, interacts with BHLH002/EGL3/MYC146, BHLH012/MYC1 and BHLH042/TT8.

The protein localises to the nucleus. Its function is as follows. Transcription activator, when associated with BHLH002/EGL3/MYC146, BHLH012/MYC1, or BHLH042/TT8. The protein is Transcription factor MYB113 (MYB113) of Arabidopsis thaliana (Mouse-ear cress).